A 325-amino-acid chain; its full sequence is MNSSFHLHFLDLGLNATEGNLSGLSVRNASSPCEDMGIAVEVFLALGLISLLENILVIGAIVRNRNLHIPMYFFVGSLAVADMLVSLSNFWETITIYLLTNKHLVMADASVRHLDNVFDSMICISVVASMCSLLAIAVDRYVTIFCRLRYQRIMTGRRSGAIIAGIWAFCTSCGTVFIVYYESTYVVVCLIAMFLTMLLLMASLYTHMFLLARTHVRRIAALPGHSSVRQRTGVKGAITLAMLLGVFIICWAPFFLHLILMISCPQNLYCSCFMSHFNMYLILIMCNSVIDPLIYAFRSQEMRKTFKEIVCFQGFRTPCRFPSTY.

The Extracellular portion of the chain corresponds to 1–37 (MNSSFHLHFLDLGLNATEGNLSGLSVRNASSPCEDMG). Residues Asn-2, Asn-15, Asn-20, and Asn-28 are each glycosylated (N-linked (GlcNAc...) asparagine). The helical transmembrane segment at 38 to 61 (IAVEVFLALGLISLLENILVIGAI) threads the bilayer. Topologically, residues 62-73 (VRNRNLHIPMYF) are cytoplasmic. Residues 74–97 (FVGSLAVADMLVSLSNFWETITIY) form a helical membrane-spanning segment. Residues 98–114 (LLTNKHLVMADASVRHL) lie on the Extracellular side of the membrane. The helical transmembrane segment at 115–138 (DNVFDSMICISVVASMCSLLAIAV) threads the bilayer. Residues 139–155 (DRYVTIFCRLRYQRIMT) are Cytoplasmic-facing. A helical transmembrane segment spans residues 156 to 179 (GRRSGAIIAGIWAFCTSCGTVFIV). Topologically, residues 180-186 (YYESTYV) are extracellular. The helical transmembrane segment at 187–211 (VVCLIAMFLTMLLLMASLYTHMFLL) threads the bilayer. At 212-239 (ARTHVRRIAALPGHSSVRQRTGVKGAIT) the chain is on the cytoplasmic side. The helical transmembrane segment at 240-265 (LAMLLGVFIICWAPFFLHLILMISCP) threads the bilayer. At 266–273 (QNLYCSCF) the chain is on the extracellular side. Residues 274–297 (MSHFNMYLILIMCNSVIDPLIYAF) form a helical membrane-spanning segment. The Cytoplasmic portion of the chain corresponds to 298–325 (RSQEMRKTFKEIVCFQGFRTPCRFPSTY). Residue Cys-311 is the site of S-palmitoyl cysteine attachment.

Belongs to the G-protein coupled receptor 1 family.

The protein localises to the cell membrane. Functionally, receptor for MSH (alpha, beta and gamma) and ACTH. The activity of this receptor is mediated by G proteins which activate adenylate cyclase. This receptor is a possible mediator of the immunomodulation properties of melanocortins. The chain is Melanocortin receptor 5 (MC5R) from Ovis aries (Sheep).